Reading from the N-terminus, the 276-residue chain is Halorhodopsin (276 aa).

Residues 1–21 (MTAASTTATTMLQATQSDVLQ) constitute a propeptide that is removed on maturation. Residues 22 to 25 (EIQS) lie on the Extracellular side of the membrane. A helical membrane pass occupies residues 26-51 (NFLLNSSIWVNIALAGVVILLFVAMG). The Cytoplasmic segment spans residues 52 to 57 (RDIESP). Residues 58–81 (RAKLIWVATMLVPLVSISSYAGLA) form a helical membrane-spanning segment. The Extracellular portion of the chain corresponds to 82-105 (SGLTVGFLQMPPGHALAGQEVLSP). Residues 106–127 (WGRYLTWTFSTPMILLALGLLA) traverse the membrane as a helical segment. At 128-130 (DTD) the chain is on the cytoplasmic side. Residues 131–154 (IASLFTAITMDIGMCVTGLAAALI) traverse the membrane as a helical segment. Over 155–157 (TSS) the chain is Extracellular. The helical transmembrane segment at 158–180 (HLLRWVFYGISCAFFVAVLYVLL) threads the bilayer. The Cytoplasmic segment spans residues 181–192 (VQWPADAEAAGT). Residues 193 to 216 (SEIFGTLKILTVVLWLGYPILWAL) traverse the membrane as a helical segment. The Extracellular segment spans residues 217–225 (GSEGVALLS). The helical transmembrane segment at 226–254 (VGVTSWGYSGLDILAKYVFAFLLLRWVAA) threads the bilayer. Position 241 is an N6-(retinylidene)lysine (Lys-241). Over 255–276 (NEGAVSGSGMSIGSGGAAPADD) the chain is Cytoplasmic.

This sequence belongs to the archaeal/bacterial/fungal opsin family.

It localises to the cell membrane. Functionally, light-driven chloride pump. This is Halorhodopsin (hop) from Halobacterium halobium (strain port).